The chain runs to 439 residues: tRNA modification GTPase MnmE (439 aa).

(6S)-5-formyl-5,6,7,8-tetrahydrofolate-binding residues include R20, E78, and K116. One can recognise a TrmE-type G domain in the interval 211-364; the sequence is GIYVAILGEP…LLSAIQKKVE (154 aa). GTP contacts are provided by residues 221–226, 240–246, and 265–268; these read NSGKST, SEYAGTT, and DTAG. Mg(2+) is bound by residues S225 and T246. K439 contacts (6S)-5-formyl-5,6,7,8-tetrahydrofolate.

The protein belongs to the TRAFAC class TrmE-Era-EngA-EngB-Septin-like GTPase superfamily. TrmE GTPase family. In terms of assembly, homodimer. Heterotetramer of two MnmE and two MnmG subunits. K(+) is required as a cofactor.

Its subcellular location is the cytoplasm. Its function is as follows. Exhibits a very high intrinsic GTPase hydrolysis rate. Involved in the addition of a carboxymethylaminomethyl (cmnm) group at the wobble position (U34) of certain tRNAs, forming tRNA-cmnm(5)s(2)U34. The chain is tRNA modification GTPase MnmE from Ehrlichia ruminantium (strain Gardel).